A 360-amino-acid polypeptide reads, in one-letter code: Phospho-N-acetylmuramoyl-pentapeptide-transferase (360 aa).

Helical transmembrane passes span 21–41, 70–90, 97–117, 134–154, 168–188, 199–219, 236–256, 263–283, 288–308, and 338–358; these read YLTLRGILGILTALVISFIVG, GTPTMGGALILVTITVSTLLW, YVWAVLLVTLAYGLIGFVDDY, YLWQSVFGLGAALFLYHTASS, VVLNMGWLYVPLVYFVVVGSS, GLAILPTVLVAGGLAIFAYAS, AGELVVFCGALVGAGLGFLWF, VFMGDIGALALGAALGMVAVL, IVLMIMGGIFVMETVSVMLQV, and VIVRFWIISVILVLIGLATLK.

It belongs to the glycosyltransferase 4 family. MraY subfamily. Requires Mg(2+) as cofactor.

It localises to the cell inner membrane. It catalyses the reaction UDP-N-acetyl-alpha-D-muramoyl-L-alanyl-gamma-D-glutamyl-meso-2,6-diaminopimeloyl-D-alanyl-D-alanine + di-trans,octa-cis-undecaprenyl phosphate = di-trans,octa-cis-undecaprenyl diphospho-N-acetyl-alpha-D-muramoyl-L-alanyl-D-glutamyl-meso-2,6-diaminopimeloyl-D-alanyl-D-alanine + UMP. The protein operates within cell wall biogenesis; peptidoglycan biosynthesis. Functionally, catalyzes the initial step of the lipid cycle reactions in the biosynthesis of the cell wall peptidoglycan: transfers peptidoglycan precursor phospho-MurNAc-pentapeptide from UDP-MurNAc-pentapeptide onto the lipid carrier undecaprenyl phosphate, yielding undecaprenyl-pyrophosphoryl-MurNAc-pentapeptide, known as lipid I. This Methylococcus capsulatus (strain ATCC 33009 / NCIMB 11132 / Bath) protein is Phospho-N-acetylmuramoyl-pentapeptide-transferase.